The chain runs to 486 residues: Ribulose bisphosphate carboxylase large chain (486 aa).

Substrate-binding residues include N126 and T176. The Proton acceptor role is filled by K178. K180 serves as a coordination point for substrate. Mg(2+)-binding residues include K204, D206, and E207. An N6-carboxylysine modification is found at K204. H296 serves as the catalytic Proton acceptor. Substrate is bound by residues R297, H329, and S381.

It belongs to the RuBisCO large chain family. Type I subfamily. Heterohexadecamer of 8 large chains and 8 small chains. Requires Mg(2+) as cofactor.

It catalyses the reaction 2 (2R)-3-phosphoglycerate + 2 H(+) = D-ribulose 1,5-bisphosphate + CO2 + H2O. The enzyme catalyses D-ribulose 1,5-bisphosphate + O2 = 2-phosphoglycolate + (2R)-3-phosphoglycerate + 2 H(+). RuBisCO catalyzes two reactions: the carboxylation of D-ribulose 1,5-bisphosphate, the primary event in carbon dioxide fixation, as well as the oxidative fragmentation of the pentose substrate. Both reactions occur simultaneously and in competition at the same active site. The protein is Ribulose bisphosphate carboxylase large chain of Methylacidiphilum infernorum (isolate V4) (Methylokorus infernorum (strain V4)).